A 107-amino-acid polypeptide reads, in one-letter code: Putative ankyrin repeat protein RP714 (107 aa).

3 ANK repeats span residues 7–36, 40–69, and 73–102; these read PPLSPLIIAVLNGNIEYTSELLQNGVDIDV, NGNSALHIAASKGYTKIATMLLLYGATIDA, and ELATPLHYAAANNYKDLTQYLLNMNANKSA.

The protein is Putative ankyrin repeat protein RP714 of Rickettsia prowazekii (strain Madrid E).